The chain runs to 453 residues: Chromosomal replication initiator protein DnaA (453 aa).

The domain I, interacts with DnaA modulators stretch occupies residues 1–75 (MSENMEELWS…SLKKISGKQL (75 aa)). The segment at 75-114 (LKIKFLLPGEKIKMEEQNNENEEKPESTSKKSSQGSEHTT) is domain II. A compositionally biased stretch (basic and acidic residues) spans 87 to 103 (KMEEQNNENEEKPESTS). A disordered region spans residues 87–112 (KMEEQNNENEEKPESTSKKSSQGSEH). The tract at residues 115-331 (WLNPKYTFDT…GGLIRVIAYS (217 aa)) is domain III, AAA+ region. G159, G161, K162, and T163 together coordinate ATP. Residues 332 to 453 (SMANKKITKE…DEIKNLLHGD (122 aa)) are domain IV, binds dsDNA.

Belongs to the DnaA family. In terms of assembly, oligomerizes as a right-handed, spiral filament on DNA at oriC.

Its subcellular location is the cytoplasm. Its function is as follows. Plays an essential role in the initiation and regulation of chromosomal replication. ATP-DnaA binds to the origin of replication (oriC) to initiate formation of the DNA replication initiation complex once per cell cycle. Binds the DnaA box (a 9 base pair repeat at the origin) and separates the double-stranded (ds)DNA. Forms a right-handed helical filament on oriC DNA; dsDNA binds to the exterior of the filament while single-stranded (ss)DNA is stabiized in the filament's interior. The ATP-DnaA-oriC complex binds and stabilizes one strand of the AT-rich DNA unwinding element (DUE), permitting loading of DNA polymerase. After initiation quickly degrades to an ADP-DnaA complex that is not apt for DNA replication. Binds acidic phospholipids. This is Chromosomal replication initiator protein DnaA from Natranaerobius thermophilus (strain ATCC BAA-1301 / DSM 18059 / JW/NM-WN-LF).